We begin with the raw amino-acid sequence, 466 residues long: Cytochrome P450 85A1 (466 aa).

Residues 1–21 (MVLAVLIGVLVGIVLVSSLLL) traverse the membrane as a helical segment. C416 lines the heme pocket.

The protein belongs to the cytochrome P450 family. Requires heme as cofactor.

The protein resides in the membrane. It carries out the reaction 6-deoxoteasterone + reduced [NADPH--hemoprotein reductase] + O2 = 6alpha-hydroxyteasterone + oxidized [NADPH--hemoprotein reductase] + H2O + H(+). The enzyme catalyses 6alpha-hydroxytyphasterol + reduced [NADPH--hemoprotein reductase] + O2 = teasterone + oxidized [NADPH--hemoprotein reductase] + 2 H2O + H(+). The catalysed reaction is 3-dehydro-6-deoxoteasterone + reduced [NADPH--hemoprotein reductase] + O2 = 3-dehydro-6alpha-hydroxyteasterone + oxidized [NADPH--hemoprotein reductase] + H2O + H(+). It catalyses the reaction 3-dehydro-6alpha-hydroxyteasterone + reduced [NADPH--hemoprotein reductase] + O2 = 3-dehydroteasterone + oxidized [NADPH--hemoprotein reductase] + 2 H2O + H(+). It carries out the reaction 6-deoxotyphasterol + reduced [NADPH--hemoprotein reductase] + O2 = 6alpha-hydroxytyphasterol + oxidized [NADPH--hemoprotein reductase] + H2O + H(+). The enzyme catalyses 6alpha-hydroxytyphasterol + reduced [NADPH--hemoprotein reductase] + O2 = typhasterol + oxidized [NADPH--hemoprotein reductase] + 2 H2O + H(+). The catalysed reaction is 6-deoxocastasterone + reduced [NADPH--hemoprotein reductase] + O2 = 6alpha-hydroxycastasterone + oxidized [NADPH--hemoprotein reductase] + H2O + H(+). It catalyses the reaction 6alpha-hydroxycastasterone + reduced [NADPH--hemoprotein reductase] + O2 = castasterone + oxidized [NADPH--hemoprotein reductase] + 2 H2O + H(+). It carries out the reaction 3-dehydro-6-deoxoteasterone + 2 reduced [NADPH--hemoprotein reductase] + 2 O2 = 3-dehydroteasterone + 2 oxidized [NADPH--hemoprotein reductase] + 3 H2O + 2 H(+). The enzyme catalyses 6-deoxocastasterone + 2 reduced [NADPH--hemoprotein reductase] + 2 O2 = castasterone + 2 oxidized [NADPH--hemoprotein reductase] + 3 H2O + 2 H(+). The catalysed reaction is 6-deoxoteasterone + 2 reduced [NADPH--hemoprotein reductase] + 2 O2 = teasterone + 2 oxidized [NADPH--hemoprotein reductase] + 3 H2O + 2 H(+). It catalyses the reaction 6-deoxotyphasterol + 2 reduced [NADPH--hemoprotein reductase] + 2 O2 = typhasterol + 2 oxidized [NADPH--hemoprotein reductase] + 3 H2O + 2 H(+). Its pathway is plant hormone biosynthesis; brassinosteroid biosynthesis. In terms of biological role, involved in reduction steps of the biosynthesis of plant campesterol-derivative steroids, ending to castasterone (CS) but missing brassinolide (BL). Catalyzes the C6-oxidation step in brassinosteroids biosynthesis; the conversion of 6-deoxoteasterone (6-deoxoTE) to teasterone (TE), 3-dehydro-6-deoxoteasterone (6-deoxo3DT, 6-deoxo-3-DHT) to 3-dehydroteasterone (3DT, 3-DHT), 6-deoxotyphasterol (6-deoxoTY) to typhasterol (TY) and of 6-deoxocastasterone (6-deoxoCS) to castasterone (CS). The chain is Cytochrome P450 85A1 from Brachypodium distachyon (Purple false brome).